The sequence spans 132 residues: MANFVGSWKLEQSENMDAVLQKLGINVIKRKLITSSKPEITFTLEGNKMTMKTVSALKTTVISFTFGEEFKEETADGRTVMTTFTKDSDSKISQVQKCPENTTHVVREVTGGKMIATVTVGDVKAVNNYHKV.

This sequence belongs to the calycin superfamily. Fatty-acid binding protein (FABP) family.

The protein is Fatty acid-binding protein type 3 of Fasciola hepatica (Liver fluke).